Consider the following 205-residue polypeptide: Methylamine utilization protein MauD (205 aa).

A helical transmembrane segment spans residues 5–25 (IMIASNVLLWGAFLALAALML). The region spanning 50–184 (PDIGERSPVF…VESLFETTRV (135 aa)) is the Thioredoxin domain.

The protein localises to the membrane. It participates in one-carbon metabolism; methylamine degradation. Its function is as follows. May be specifically involved in the processing, transport, and/or maturation of the MADH beta-subunit. This Methylobacillus flagellatus (strain ATCC 51484 / DSM 6875 / VKM B-1610 / KT) protein is Methylamine utilization protein MauD (mauD).